The following is a 591-amino-acid chain: L-fucose isomerase (591 aa).

Catalysis depends on proton acceptor residues E337 and D361. The Mn(2+) site is built by E337, D361, and H528.

It belongs to the L-fucose isomerase family. Homohexamer. Mn(2+) serves as cofactor.

It is found in the cytoplasm. It catalyses the reaction L-fucose = L-fuculose. The protein operates within carbohydrate degradation; L-fucose degradation; L-lactaldehyde and glycerone phosphate from L-fucose: step 1/3. Its function is as follows. Converts the aldose L-fucose into the corresponding ketose L-fuculose. The polypeptide is L-fucose isomerase (Escherichia coli (strain UTI89 / UPEC)).